A 271-amino-acid polypeptide reads, in one-letter code: Elongation factor Ts (271 aa).

The segment at 76 to 79 (TDFV) is involved in Mg(2+) ion dislocation from EF-Tu.

This sequence belongs to the EF-Ts family.

Its subcellular location is the cytoplasm. In terms of biological role, associates with the EF-Tu.GDP complex and induces the exchange of GDP to GTP. It remains bound to the aminoacyl-tRNA.EF-Tu.GTP complex up to the GTP hydrolysis stage on the ribosome. In Mycolicibacterium vanbaalenii (strain DSM 7251 / JCM 13017 / BCRC 16820 / KCTC 9966 / NRRL B-24157 / PYR-1) (Mycobacterium vanbaalenii), this protein is Elongation factor Ts.